Here is a 245-residue protein sequence, read N- to C-terminus: Triosephosphate isomerase (245 aa).

9-11 (NWK) provides a ligand contact to substrate. His92 serves as the catalytic Electrophile. Glu164 functions as the Proton acceptor in the catalytic mechanism. Residues Gly170, Ser209, and 230–231 (GG) each bind substrate.

This sequence belongs to the triosephosphate isomerase family. As to quaternary structure, homodimer.

Its subcellular location is the cytoplasm. It carries out the reaction D-glyceraldehyde 3-phosphate = dihydroxyacetone phosphate. It functions in the pathway carbohydrate biosynthesis; gluconeogenesis. The protein operates within carbohydrate degradation; glycolysis; D-glyceraldehyde 3-phosphate from glycerone phosphate: step 1/1. Functionally, involved in the gluconeogenesis. Catalyzes stereospecifically the conversion of dihydroxyacetone phosphate (DHAP) to D-glyceraldehyde-3-phosphate (G3P). The sequence is that of Triosephosphate isomerase from Cupriavidus pinatubonensis (strain JMP 134 / LMG 1197) (Cupriavidus necator (strain JMP 134)).